We begin with the raw amino-acid sequence, 260 residues long: uncharacterized protein (260 aa).

A run of 6 helical transmembrane segments spans residues 39-59, 68-88, 111-131, 159-179, 193-213, and 214-234; these read IFYL…LIEA, IIVG…SFLI, FLGS…FFLG, LIFS…LFKI, FIYL…ILSQ, and FILV…IKLI.

This sequence belongs to the TatC family.

It is found in the mitochondrion membrane. This is an uncharacterized protein from Reclinomonas americana.